Reading from the N-terminus, the 158-residue chain is Cyclic pyranopterin monophosphate synthase (158 aa).

Residues 75–77 (LCH) and 113–114 (ME) each bind substrate. The active site involves D128.

This sequence belongs to the MoaC family. In terms of assembly, homohexamer; trimer of dimers.

It carries out the reaction (8S)-3',8-cyclo-7,8-dihydroguanosine 5'-triphosphate = cyclic pyranopterin phosphate + diphosphate. It functions in the pathway cofactor biosynthesis; molybdopterin biosynthesis. In terms of biological role, catalyzes the conversion of (8S)-3',8-cyclo-7,8-dihydroguanosine 5'-triphosphate to cyclic pyranopterin monophosphate (cPMP). The sequence is that of Cyclic pyranopterin monophosphate synthase from Azorhizobium caulinodans (strain ATCC 43989 / DSM 5975 / JCM 20966 / LMG 6465 / NBRC 14845 / NCIMB 13405 / ORS 571).